A 142-amino-acid chain; its full sequence is Tol-Pal system protein TolR (142 aa).

Residues 1–17 (MARARGRGRRDLKSEIN) are Cytoplasmic-facing. A helical membrane pass occupies residues 18–38 (IVPLLDVLLVLLLIFMATAPI). The Periplasmic portion of the chain corresponds to 39–142 (ITQSVEVDLP…KSVGLMTQPI (104 aa)).

Belongs to the ExbD/TolR family. The Tol-Pal system is composed of five core proteins: the inner membrane proteins TolA, TolQ and TolR, the periplasmic protein TolB and the outer membrane protein Pal. They form a network linking the inner and outer membranes and the peptidoglycan layer.

The protein localises to the cell inner membrane. Part of the Tol-Pal system, which plays a role in outer membrane invagination during cell division and is important for maintaining outer membrane integrity. Required, with TolQ, for the proton motive force-dependent activation of TolA and for TolA-Pal interaction. The sequence is that of Tol-Pal system protein TolR from Escherichia coli O157:H7.